A 1086-amino-acid chain; its full sequence is Transcription initiation factor TFIID subunit 2 (1086 aa).

Residues 1-11 (MDFSEASTSGD) are compositionally biased toward polar residues. Disordered stretches follow at residues 1 to 53 (MDFS…PPPV) and 1064 to 1086 (GYEAARRSPPRRDFGDETMNLMQ). Pro residues-rich tracts occupy residues 19-36 (PFPPKPREGAPPPAPPLA) and 44-53 (APPPLQPPPV). Residues 1067–1078 (AARRSPPRRDFG) are compositionally biased toward basic and acidic residues.

This sequence belongs to the TAF2 family. Component of the TFIID basal transcription factor complex, composed of TATA-box-binding protein tbp-1, and a number of TBP-associated factors (TAFs).

It localises to the nucleus. In terms of biological role, the TFIID basal transcription factor complex plays a major role in the initiation of RNA polymerase II (Pol II)-dependent transcription. TFIID recognizes and binds promoters via its subunit tbp-1, a TATA-box-binding protein, and promotes assembly of the pre-initiation complex (PIC). The TFIID complex consists of tbp-1 and TBP-associated factors (TAFs), including taf-2. May regulate RNA polymerase II activity and thereby may control transcription initiation by RNA polymerase II. This is Transcription initiation factor TFIID subunit 2 from Caenorhabditis elegans.